The primary structure comprises 1092 residues: Electroneutral sodium bicarbonate exchanger 1 (1092 aa).

3 disordered regions span residues 1–26 (MPAG…VDQG), 55–95 (LGRQ…HDTP), and 243–263 (KKQS…PQSA). The Extracellular portion of the chain corresponds to 1–478 (MPAGSNEPDG…DYRDALSLQC (478 aa)). Residues 58 to 76 (QSHRHHRTHGQKHRRRGGR) are compositionally biased toward basic residues. Basic and acidic residues predominate over residues 243-255 (KKQSDPHSMDRDG). Residues 479–499 (LASFLFLYCACMSPVITFGGL) traverse the membrane as a helical segment. The Cytoplasmic segment spans residues 500 to 507 (LGEATEGR). Residues 508 to 528 (ISAIESLFGASMTGIAYSLFA) traverse the membrane as a helical segment. At 529–565 (GQPLTILGSTGPVLVFEKILFKFCKDYALSYLSLRAC) the chain is on the extracellular side. Residues 566–586 (IGLWTAFLCIVLVATDASSLV) traverse the membrane as a helical segment. At 587 to 595 (CYITRFTEE) the chain is on the cytoplasmic side. Residues 596-616 (AFASLICIIFIYEAIEKLIHL) form a helical membrane-spanning segment. Residues 617–687 (AETYPIHMHS…EFIGSACGHH (71 aa)) lie on the Extracellular side of the membrane. 2 disulfides stabilise this stretch: Cys-636-Cys-684 and Cys-638-Cys-672. 2 N-linked (GlcNAc) asparagine glycosylation sites follow: Asn-646 and Asn-666. The chain crosses the membrane as a helical span at residues 688–708 (GPYTPDVLFWSCILFFATFIV). Topologically, residues 709-731 (SSTLKTFKTSRYFPTRVRSTVSD) are cytoplasmic. A helical membrane pass occupies residues 732–752 (FAVFLTIFTMVILDFLIGVPS). The Extracellular portion of the chain corresponds to 753 to 778 (PKLQVPSVFKPTRDDRGWFISPIGPN). Residues 779–799 (PWWTVIAAIIPALLCTILIFM) form a helical membrane-spanning segment. Over 800-824 (DQQITAVIINRKEHKLKKGCGYHLD) the chain is Cytoplasmic. Residues 825-845 (LLVVAIMLGVCSLMGLPWFVA) traverse the membrane as a helical segment. At 846 to 881 (ATVLSITHVNSLKLESECSAPGEQPKFLGIREQRVT) the chain is on the extracellular side. The helical transmembrane segment at 882-902 (GLMIFVLMGCSVFMTAVLKFI) threads the bilayer. The Cytoplasmic portion of the chain corresponds to 903 to 904 (PM). Residues 905-925 (PVLYGVFLYMGVSSLQGIQFF) form a helical membrane-spanning segment. The Extracellular segment spans residues 926–962 (DRLKLFGMPAKHQPDFIYLRHVPLRKVHLFTLVQLTC). Residues 963–983 (LVLLWVIKASPAAIVFPMMVL) traverse the membrane as a helical segment. The Cytoplasmic portion of the chain corresponds to 984–1092 (ALVFVRKVMD…GNTKEKSPFN (109 aa)).

Belongs to the anion exchanger (TC 2.A.31) family. As to quaternary structure, homodimer. Expressed in the Purkinje cells and dendrites in the molecular layer of the cerebellum (at protein level). Expressed in the hippocampal neurons (at protein level). Strong expression observed in testis and moderate expression in kidney inner medulla, the submandibular gland, eye, cerebrum and cerebellum.

It localises to the cell membrane. The protein resides in the apical cell membrane. Its subcellular location is the basolateral cell membrane. It is found in the cytoplasmic vesicle. The protein localises to the secretory vesicle. It localises to the synaptic vesicle membrane. It catalyses the reaction 2 hydrogencarbonate(out) + chloride(in) + Na(+)(out) = 2 hydrogencarbonate(in) + chloride(out) + Na(+)(in). In terms of biological role, mediates electroneutral sodium- and carbonate-dependent chloride-HCO3(-) exchange with a Na(+):HCO3(-) stoichiometry of 2:1. Plays a major role in pH regulation in neurons. Mediates sodium reabsorption in the renal cortical collecting ducts. This is Electroneutral sodium bicarbonate exchanger 1 from Rattus norvegicus (Rat).